We begin with the raw amino-acid sequence, 56 residues long: Protein hunchback (56 aa).

C2H2-type zinc fingers lie at residues H1 to H5, F11 to H33, and F39 to L56.

It belongs to the hunchback C2H2-type zinc-finger protein family.

It localises to the nucleus. Functionally, gap class segmentation protein that controls development of head structures. The polypeptide is Protein hunchback (hb) (Euscelis plebejus (Leafhopper)).